Here is a 1376-residue protein sequence, read N- to C-terminus: Zinc finger MYM-type protein 2 (1376 aa).

A compositionally biased stretch (polar residues) spans 30–53 (NVGNSFSGPPNPLVSRSSKFQNSS). 2 disordered regions span residues 30–56 (NVGN…SVED) and 85–158 (TSSK…FSSS). Residues lysine 48, lysine 88, lysine 98, and lysine 104 each participate in a glycyl lysine isopeptide (Lys-Gly) (interchain with G-Cter in SUMO2) cross-link. Residues 127–138 (TNQGQEKSSSNF) show a composition bias toward polar residues. The span at 139 to 152 (IERRPSETKNRTND) shows a compositional bias: basic and acidic residues. Glycyl lysine isopeptide (Lys-Gly) (interchain with G-Cter in SUMO2) cross-links involve residues lysine 147, lysine 253, and lysine 297. A disordered region spans residues 269-304 (DVFQNGESAPHHNPDSWISQSASFPRNQKQQGVDSL). The span at 284-302 (SWISQSASFPRNQKQQGVD) shows a compositional bias: polar residues. A Phosphoserine modification is found at serine 305. Glycyl lysine isopeptide (Lys-Gly) (interchain with G-Cter in SUMO2) cross-links involve residues lysine 312, lysine 324, lysine 347, and lysine 365. The segment at 326 to 362 (VKVTCANCKKPLQKGQTAYQRKGSAHLFCSTTCLSSF) adopts an MYM-type 1 zinc-finger fold. The MYM-type 2 zinc-finger motif lies at 368–408 (PKKLCVMCKKDITTMKGTIVAQVDSSESFQEFCSTSCLSLY). Residues lysine 416, lysine 440, lysine 490, lysine 502, lysine 512, lysine 528, and lysine 531 each participate in a glycyl lysine isopeptide (Lys-Gly) (interchain with G-Cter in SUMO2) cross-link. 2 consecutive MYM-type zinc fingers follow at residues 420–455 (NKSR…FNRY) and 462–501 (IMNC…VTEY). The MYM-type 5 zinc finger occupies 532–569 (LTTCTGCRTQCRFFDMTQCIGPNGYMEPYCSTACMNSH). Residues lysine 575, lysine 602, lysine 648, lysine 657, lysine 687, lysine 699, and lysine 708 each participate in a glycyl lysine isopeptide (Lys-Gly) (interchain with G-Cter in SUMO2) cross-link. The segment at 635-670 (QLKCNYCKNSFCSKPEILEWENKVHQFCSKTCSDDY) adopts an MYM-type 6 zinc-finger fold. 2 MYM-type zinc fingers span residues 722–757 (RCVT…CKKF) and 763–798 (KAAR…LLRF). Residues lysine 763, lysine 787, lysine 811, and lysine 828 each participate in a glycyl lysine isopeptide (Lys-Gly) (interchain with G-Cter in SUMO2) cross-link. Serine 837 is modified (phosphoserine). The tract at residues 1027–1063 (VFGEEYEEQPRPRSKKKGTKRKAVSGYQSHDDSSDNS) is disordered. The segment covering 1038–1049 (PRSKKKGTKRKA) has biased composition (basic residues). Serine 1063 is subject to Phosphoserine. The residue at position 1375 (threonine 1375) is a Phosphothreonine.

As to quaternary structure, can form homodimers. May be a component of a BHC histone deacetylase complex that contains HDAC1, HDAC2, HMG20B/BRAF35, KDM1A, RCOR1/CoREST, PHF21A/BHC80, ZMYM2, ZNF217, ZMYM3, GSE1 and GTF2I. Interacts with FOXP1 and FOXP2. In terms of tissue distribution, low but widespread expression is detected in the developing kidney.

The protein resides in the nucleus. In terms of biological role, involved in the negative regulation of transcription. The chain is Zinc finger MYM-type protein 2 (Zmym2) from Mus musculus (Mouse).